Here is a 368-residue protein sequence, read N- to C-terminus: N-acetylneuraminate epimerase (368 aa).

An N-terminal signal peptide occupies residues 1 to 19 (MNKTITALAILMASFAANA). 7 Kelch repeats span residues 40–84 (TVYI…AFID), 86–137 (NLYV…FVHN), 139–173 (KAYV…KINA), 174–219 (HYFD…VNKG), 222–265 (TWLI…VAGG), 287–336 (ENYQ…PWNN), and 338–367 (LLII…VTVQ). Glu-228 acts as the Proton acceptor in catalysis.

It belongs to the NanM family. Homodimer.

Its subcellular location is the periplasm. The enzyme catalyses N-acetyl-alpha-neuraminate = N-acetyl-beta-neuraminate. Converts alpha-N-acetylneuranimic acid (Neu5Ac) to the beta-anomer, accelerating the equilibrium between the alpha- and beta-anomers. Probably facilitates sialidase-negative bacteria to compete successfully for limited amounts of extracellular Neu5Ac, which is likely taken up in the beta-anomer. In addition, the rapid removal of sialic acid from solution might be advantageous to the bacterium to damp down host responses. This Escherichia coli O157:H7 protein is N-acetylneuraminate epimerase.